Consider the following 1275-residue polypeptide: Mediator of RNA polymerase II transcription subunit 33B (1275 aa).

Over residues 772–791 (GSQSLTPSSGSSSLSTSGGD) the composition is skewed to low complexity. The segment at 772–792 (GSQSLTPSSGSSSLSTSGGDD) is disordered.

It belongs to the Mediator complex subunit 33 family. Component of the Mediator complex. As to expression, ubiquitous.

The protein localises to the nucleus. Functionally, component of the Mediator complex, a coactivator involved in the regulated transcription of nearly all RNA polymerase II-dependent genes. Mediator functions as a bridge to convey information from gene-specific regulatory proteins to the basal RNA polymerase II transcription machinery. The Mediator complex, having a compact conformation in its free form, is recruited to promoters by direct interactions with regulatory proteins and serves for the assembly of a functional preinitiation complex with RNA polymerase II and the general transcription factors. Involved in the repression of phenylpropanoid biosynthesis. May compete with MED33B for common binding partners or for occupancy in Mediator. The chain is Mediator of RNA polymerase II transcription subunit 33B (MED33B) from Arabidopsis thaliana (Mouse-ear cress).